Reading from the N-terminus, the 265-residue chain is MASSNLLTLALFLVLLTHANSSNDASFNVETFNKTNLILQGDATVSSEGHLLLTNVKGNEEDSMGRAFYSAPIQINDRTIDNLASFSTNFTFRINAKNNENSAYGLAFALVPVGSRPKLKGRYLGLFNTANYDRDAHTVAVVFDTVSNRIEIDVNSIRPIATESCNFGHNNGEKAEVRITYYSPKNDLRVSLLYPSSEEKCHVSATVPLEKEVEDWVSVGFSATSGSKKETTETHNVLSWSFSSNFINFEGKKSERSNILLNKIL.

A signal peptide spans 1–21 (MASSNLLTLALFLVLLTHANS). N33 and N89 each carry an N-linked (GlcNAc...) asparagine glycan. Cysteines 165 and 201 form a disulfide.

Belongs to the leguminous lectin family.

Seed storage. This carbohydrate-binding lectin has toxic effects on bean bruchid pests. Antibiosis properties of legume lectins are proposed to be due to the lysis of epithelial cells of the intestine by binding to the carbohydrate moieties of these proteins. The protein is Arcelin-2 (ARC2) of Phaseolus vulgaris (Kidney bean).